Consider the following 346-residue polypeptide: Ribosomal RNA small subunit methyltransferase H (346 aa).

Residues 46 to 48 (GGY), aspartate 63, phenylalanine 90, aspartate 113, and glutamine 120 contribute to the S-adenosyl-L-methionine site. The interval 270-346 (GGSAGSRHMP…LPETNELARS (77 aa)) is disordered.

Belongs to the methyltransferase superfamily. RsmH family.

The protein localises to the cytoplasm. It carries out the reaction cytidine(1402) in 16S rRNA + S-adenosyl-L-methionine = N(4)-methylcytidine(1402) in 16S rRNA + S-adenosyl-L-homocysteine + H(+). Its function is as follows. Specifically methylates the N4 position of cytidine in position 1402 (C1402) of 16S rRNA. The polypeptide is Ribosomal RNA small subunit methyltransferase H (Brucella suis (strain ATCC 23445 / NCTC 10510)).